The primary structure comprises 564 residues: Agglutinin (564 aa).

Residues 1–24 (MYAVATWLCFGSTSGWSFTLEDNN) form the signal peptide. 32-34 (IIN) contributes to the beta-D-galactose binding site. Asparagine 34 carries N-linked (GlcNAc...) asparagine glycosylation. Active-site residues include tyrosine 104, tyrosine 147, glutamate 200, and arginine 203. AMP-binding positions include 104-105 (YV) and 145-147 (GNY). A glycan (N-linked (GlcNAc...) asparagine) is linked at asparagine 259. Residues cysteine 282 and cysteine 306 are joined by a disulfide bond. Positions 291–302 (SLLIRPVVPNFN) are cleaved as a propeptide — linker peptide. The Ricin B-type lectin 1 domain occupies 309–436 (PEPIVRIVGR…YAVSQGWLPT (128 aa)). Beta-D-galactose contacts are provided by residues isoleucine 312, 324–328 (DVTGE), glutamine 337, lysine 342, and asparagine 348. A 1-alpha repeat occupies 319–361 (NGLCVDVTGEEFFDGNPIQLWPCKSNTDWNQLWTLRKDSTIRS). The cysteines at positions 322 and 341 are disulfide-linked. One copy of the 1-beta repeat lies at 362 to 402 (NGKCLTISKSSPRQQVVIYNCSTATVGATRWQIWDNRTIIN). Residues cysteine 365 and cysteine 382 are joined by a disulfide bond. N-linked (GlcNAc...) asparagine glycosylation is found at asparagine 397 and asparagine 437. A 1-gamma repeat occupies 405-437 (SGLVLAATSGNSGTKLTVQTNIYAVSQGWLPTN). Position 437 (asparagine 437) interacts with beta-D-galactose. A Ricin B-type lectin 2 domain is found at 439–563 (TQPFVTTIVG…GNLNQIWLPL (125 aa)). The stretch at 450–485 (YGMCLQANSGKVWLEDCTSEKAEQQWALYADGSIRP) is one 2-alpha repeat. Disulfide bonds link cysteine 453–cysteine 466 and cysteine 492–cysteine 509. A 2-beta repeat occupies 489–528 (RDNCLTTDANIKGTVVKILSCGPASSGQRWMFKNDGTILN). The stretch at 531–558 (NGLVLDVRRSDPSLKQIIVHPFHGNLNQ) is one 2-gamma repeat.

In the N-terminal section; belongs to the ribosome-inactivating protein family. Type 2 RIP subfamily.

The catalysed reaction is Endohydrolysis of the N-glycosidic bond at one specific adenosine on the 28S rRNA.. This chain is Agglutinin, found in Ricinus communis (Castor bean).